The primary structure comprises 408 residues: ATP phosphoribosyltransferase regulatory subunit (408 aa).

It belongs to the class-II aminoacyl-tRNA synthetase family. HisZ subfamily. Heteromultimer composed of HisG and HisZ subunits.

It localises to the cytoplasm. It functions in the pathway amino-acid biosynthesis; L-histidine biosynthesis; L-histidine from 5-phospho-alpha-D-ribose 1-diphosphate: step 1/9. Functionally, required for the first step of histidine biosynthesis. May allow the feedback regulation of ATP phosphoribosyltransferase activity by histidine. In Gloeothece citriformis (strain PCC 7424) (Cyanothece sp. (strain PCC 7424)), this protein is ATP phosphoribosyltransferase regulatory subunit.